Here is a 256-residue protein sequence, read N- to C-terminus: Thioredoxin-dependent peroxide reductase, mitochondrial (256 aa).

The N-terminal 61 residues, 1-61 (MAAAVGRLLR…KLFSTSSSCH (61 aa)), are a transit peptide targeting the mitochondrion. Positions 63-221 (PAVTQHAPYF…TLRLVKAFQY (159 aa)) constitute a Thioredoxin domain. The residue at position 83 (Lys83) is an N6-succinyllysine. Lys91 carries the post-translational modification N6-acetyllysine; alternate. The residue at position 91 (Lys91) is an N6-succinyllysine; alternate. The active-site Cysteine sulfenic acid (-SOH) intermediate is the Cys108. The residue at position 146 (Thr146) is a Phosphothreonine.

The protein belongs to the peroxiredoxin family. AhpC/Prx1 subfamily. As to quaternary structure, homodimer; disulfide-linked, upon oxidation. 6 homodimers assemble to form a ring-like dodecamer. Interacts with NEK6. Interacts with LRRK2. Interacts with MAP3K13. Interacts with RPS6KC1 (via PX domain). In terms of processing, phosphorylated by LRRK2; phosphorylation reduces perodixase activity. The enzyme can be inactivated by further oxidation of the cysteine sulfenic acid (C(P)-SOH) to sulphinic acid (C(P)-SO2H) and sulphonic acid (C(P)-SO3H) instead of its condensation to a disulfide bond. Post-translationally, S-palmitoylated.

Its subcellular location is the mitochondrion. The protein localises to the cytoplasm. It localises to the early endosome. It carries out the reaction a hydroperoxide + [thioredoxin]-dithiol = an alcohol + [thioredoxin]-disulfide + H2O. Its function is as follows. Thiol-specific peroxidase that catalyzes the reduction of hydrogen peroxide and organic hydroperoxides to water and alcohols, respectively. Plays a role in cell protection against oxidative stress by detoxifying peroxides. Acts synergistically with MAP3K13 to regulate the activation of NF-kappa-B in the cytosol. Required for the maintenance of physical strength. The chain is Thioredoxin-dependent peroxide reductase, mitochondrial (PRDX3) from Homo sapiens (Human).